The chain runs to 395 residues: Elongation factor Tu (395 aa).

Residues Lys-10–Lys-204 form the tr-type G domain. A G1 region spans residues Gly-19 to Thr-26. Gly-19–Thr-26 is a GTP binding site. Thr-26 provides a ligand contact to Mg(2+). The interval Gly-60–Asn-64 is G2. The tract at residues Asp-81–Gly-84 is G3. GTP is bound by residues Asp-81–His-85 and Asn-136–Asp-139. A G4 region spans residues Asn-136 to Asp-139. Positions Ser-174 to Leu-176 are G5.

This sequence belongs to the TRAFAC class translation factor GTPase superfamily. Classic translation factor GTPase family. EF-Tu/EF-1A subfamily. In terms of assembly, monomer.

The protein resides in the cytoplasm. It catalyses the reaction GTP + H2O = GDP + phosphate + H(+). GTP hydrolase that promotes the GTP-dependent binding of aminoacyl-tRNA to the A-site of ribosomes during protein biosynthesis. This Leuconostoc citreum (strain KM20) protein is Elongation factor Tu.